Reading from the N-terminus, the 1258-residue chain is Cohesin subunit SA-1 (1258 aa).

The disordered stretch occupies residues 1-59 (MITSELPVLQDSTNETTAHSDAGSELEETEVKGKRKRGRPGRPPSTNKKPRKSPGEKSR). Over residues 10 to 19 (QDSTNETTAH) the composition is skewed to polar residues. Serine 24 is subject to Phosphoserine. The SCD domain occupies 296-381 (FVHRYRDAIA…NRFKDRIVSM (86 aa)). 3 positions are modified to phosphoserine: serine 756, serine 1062, and serine 1065. A disordered region spans residues 1055-1148 (GGEDDRMSVN…EHGSEPDFLH (94 aa)). A compositionally biased stretch (low complexity) spans 1062–1075 (SVNSGSSSSKTSSV). Residues 1076–1087 (RSKKGRPPLHRK) are compositionally biased toward basic residues. A Phosphoserine modification is found at serine 1093. The span at 1095–1106 (DNTWLNRTDTMI) shows a compositional bias: polar residues. The span at 1137 to 1146 (ESEHGSEPDF) shows a compositional bias: basic and acidic residues. Lysine 1161 participates in a covalent cross-link: Glycyl lysine isopeptide (Lys-Gly) (interchain with G-Cter in SUMO2).

This sequence belongs to the SCC3 family. In terms of assembly, cohesin complexes are composed of a heterodimer between a SMC1 protein (SMC1A or SMC1B) and SMC3, which are attached via their hinge domain, and RAD21 which link them at their heads, and one STAG protein (STAG1, STAG2 or STAG3). In cohesin complexes, STAG1 is mutually exclusive with STAG2 and STAG3. Interacts directly with RAD21 in cohesin complex. The cohesin complex interacts with the cohesin loading complex subunits NIPBL/Scc2 (via HEAT repeats) and MAU2/Scc4. NIPBL directly contacts all members of the complex, RAD21, SMC1A/B, SMC3 and STAG1. Phosphorylated by PLK1. The large dissociation of cohesin from chromosome arms during prophase is partly due to its phosphorylation.

The protein localises to the nucleus. Its subcellular location is the chromosome. Its function is as follows. Component of cohesin complex, a complex required for the cohesion of sister chromatids after DNA replication. The cohesin complex apparently forms a large proteinaceous ring within which sister chromatids can be trapped. At anaphase, the complex is cleaved and dissociates from chromatin, allowing sister chromatids to segregate. The cohesin complex may also play a role in spindle pole assembly during mitosis. This chain is Cohesin subunit SA-1 (Stag1), found in Mus musculus (Mouse).